Consider the following 451-residue polypeptide: Phosphoglucosamine mutase (451 aa).

Ser102 serves as the catalytic Phosphoserine intermediate. 4 residues coordinate Mg(2+): Ser102, Asp243, Asp245, and Asp247. Ser102 bears the Phosphoserine mark.

Belongs to the phosphohexose mutase family. Requires Mg(2+) as cofactor. Post-translationally, activated by phosphorylation.

It carries out the reaction alpha-D-glucosamine 1-phosphate = D-glucosamine 6-phosphate. In terms of biological role, catalyzes the conversion of glucosamine-6-phosphate to glucosamine-1-phosphate. The sequence is that of Phosphoglucosamine mutase from Sinorhizobium medicae (strain WSM419) (Ensifer medicae).